The chain runs to 82 residues: U-actitoxin-Avd3m (82 aa).

The signal sequence occupies residues Met1–Gly16. Residues Cys21–Cys71 enclose the BPTI/Kunitz inhibitor domain. 3 cysteine pairs are disulfide-bonded: Cys21–Cys71, Cys30–Cys54, and Cys46–Cys67. The propeptide occupies Arg76–Asn82.

This sequence belongs to the venom Kunitz-type family. Sea anemone type 2 potassium channel toxin subfamily.

It is found in the secreted. It localises to the nematocyst. Functionally, serine protease inhibitor that inhibits both tissue and plasma kallikreins. Has hemolytic activity. Inhibits voltage-gated potassium channels (Kv). The polypeptide is U-actitoxin-Avd3m (Anemonia viridis (Snakelocks anemone)).